Consider the following 117-residue polypeptide: Ribonuclease P protein component (117 aa).

Belongs to the RnpA family. As to quaternary structure, consists of a catalytic RNA component (M1 or rnpB) and a protein subunit.

It carries out the reaction Endonucleolytic cleavage of RNA, removing 5'-extranucleotides from tRNA precursor.. Its function is as follows. RNaseP catalyzes the removal of the 5'-leader sequence from pre-tRNA to produce the mature 5'-terminus. It can also cleave other RNA substrates such as 4.5S RNA. The protein component plays an auxiliary but essential role in vivo by binding to the 5'-leader sequence and broadening the substrate specificity of the ribozyme. The sequence is that of Ribonuclease P protein component from Aliivibrio fischeri (strain ATCC 700601 / ES114) (Vibrio fischeri).